Consider the following 760-residue polypeptide: Transferrin receptor protein 1 (760 aa).

The Cytoplasmic segment spans residues 1 to 67 (MMDQARSAFS…KPKRCSGSIC (67 aa)). The tract at residues 1–67 (MMDQARSAFS…KPKRCSGSIC (67 aa)) is mediates interaction with SH3BP4. A phosphoserine mark is found at S10 and S19. Y20 is subject to Phosphotyrosine. The Endocytosis signal signature appears at 20–23 (YTRF). The residue at position 21 (T21) is a Phosphothreonine. Position 24 is a phosphoserine (S24). Residues 58-61 (KPKR) carry the Stop-transfer sequence motif. S-palmitoyl cysteine attachment occurs at residues C62 and C67. A helical; Signal-anchor for type II membrane protein transmembrane segment spans residues 68–88 (YGTIAVIVFFLIGFMIGYLGY). Over 89-760 (CKGVEPKTEC…GDVWDIDNEF (672 aa)) the chain is Extracellular. T104 carries an O-linked (GalNAc...) threonine glycan. The region spanning 223–313 (SKAATVTGKL…GTGDPYTPGF (91 aa)) is the PA domain. N-linked (GlcNAc...) asparagine glycans are attached at residues N251 and N317. The interval 569–760 (TMDTYKELIE…GDVWDIDNEF (192 aa)) is ligand-binding. Positions 646–648 (RGD) match the Cell attachment site; required for binding to transferrin motif. N727 is a glycosylation site (N-linked (GlcNAc...) asparagine).

This sequence belongs to the peptidase M28 family. M28B subfamily. Homodimer; disulfide-linked. Binds one transferrin or HFE molecule per subunit. Binds the HLA class II histocompatibility antigen, DR1. Interacts with SH3BP3. Interacts with STEAP3; facilitates TFRC endocytosis in erythroid precursor cells. Interacts with GRM2. In terms of assembly, (Microbial infection) Interacts with Guanarito, Junin and Machupo arenavirus glycoprotein complex. As to quaternary structure, (Microbial infection) Interacts with rabies virus protein G. (Microbial infection) Interacts with SARS-CoV-2 spike protein S. Post-translationally, stearoylated by ZDHHC6 which inhibits TFRC-mediated activation of the JNK pathway and promotes mitochondrial fragmentation. Stearoylation does not affect iron uptake. N- and O-glycosylated, phosphorylated and palmitoylated. The serum form is only glycosylated. In terms of processing, proteolytically cleaved on Arg-100 to produce the soluble serum form (sTfR). Post-translationally, palmitoylated on both Cys-62 and Cys-67. Cys-62 seems to be the major site of palmitoylation.

Its subcellular location is the cell membrane. It localises to the melanosome. It is found in the secreted. In terms of biological role, cellular uptake of iron occurs via receptor-mediated endocytosis of ligand-occupied transferrin receptor into specialized endosomes. Endosomal acidification leads to iron release. The apotransferrin-receptor complex is then recycled to the cell surface with a return to neutral pH and the concomitant loss of affinity of apotransferrin for its receptor. Transferrin receptor is necessary for development of erythrocytes and the nervous system. A second ligand, the hereditary hemochromatosis protein HFE, competes for binding with transferrin for an overlapping C-terminal binding site. Positively regulates T and B cell proliferation through iron uptake. Acts as a lipid sensor that regulates mitochondrial fusion by regulating activation of the JNK pathway. When dietary levels of stearate (C18:0) are low, promotes activation of the JNK pathway, resulting in HUWE1-mediated ubiquitination and subsequent degradation of the mitofusin MFN2 and inhibition of mitochondrial fusion. When dietary levels of stearate (C18:0) are high, TFRC stearoylation inhibits activation of the JNK pathway and thus degradation of the mitofusin MFN2. Mediates uptake of NICOL1 into fibroblasts where it may regulate extracellular matrix production. Functionally, (Microbial infection) Acts as a receptor for new-world arenaviruses: Guanarito, Junin and Machupo virus. (Microbial infection) Acts as a host entry factor for rabies virus that hijacks the endocytosis of TFRC to enter cells. Its function is as follows. (Microbial infection) Acts as a host entry factor for SARS-CoV, MERS-CoV and SARS-CoV-2 viruses that hijack the endocytosis of TFRC to enter cells. The protein is Transferrin receptor protein 1 (TFRC) of Homo sapiens (Human).